The sequence spans 235 residues: Caveolin-1 (235 aa).

The Cytoplasmic portion of the chain corresponds to 1–161; sequence MSTEQDIKTE…LVSLLALPFT (161 aa). The disordered stretch occupies residues 29–72; it reads GEAVVAPEEPKPKKNWFTFGKKKAAPTDETNIEEGGAPGDEPVK. The helical intramembrane region spans 162–182; sequence IIFAIFFGLLASINVFIIVPL. Residues 183-235 are Cytoplasmic-facing; the sequence is GKLLSIPGTLLAKLWNWLIHAIFDPIASAVGLIFSNFNIRKYGINQETTAPCV. Cys-234 carries the S-palmitoyl cysteine lipid modification.

Belongs to the caveolin family. As to quaternary structure, homooligomer containing 14-16 monomers per oligomer.

The protein localises to the golgi apparatus membrane. Its subcellular location is the cell membrane. It localises to the membrane. The protein resides in the caveola. Its function is as follows. May act as a scaffolding protein within caveolar membranes. Interacts directly with G-protein alpha subunits and can functionally regulate their activity. The polypeptide is Caveolin-1 (cav-1) (Caenorhabditis elegans).